The sequence spans 853 residues: Leucine--tRNA ligase (853 aa).

The 'HIGH' region signature appears at 42-52; it reads PYPSGNLHMGH. The 'KMSKS' region signature appears at 615–619; it reads KMSKS. Residue Lys-618 participates in ATP binding.

This sequence belongs to the class-I aminoacyl-tRNA synthetase family.

It localises to the cytoplasm. The enzyme catalyses tRNA(Leu) + L-leucine + ATP = L-leucyl-tRNA(Leu) + AMP + diphosphate. This is Leucine--tRNA ligase from Crocosphaera subtropica (strain ATCC 51142 / BH68) (Cyanothece sp. (strain ATCC 51142)).